The sequence spans 928 residues: Isoleucine--tRNA ligase (928 aa).

Positions 57–67 (PFANGNIHMGH) match the 'HIGH' region motif. Glutamate 552 provides a ligand contact to L-isoleucyl-5'-AMP. A 'KMSKS' region motif is present at residues 593 to 597 (KMSKS). Lysine 596 lines the ATP pocket. Zn(2+)-binding residues include cysteine 887, cysteine 890, cysteine 907, and cysteine 910.

The protein belongs to the class-I aminoacyl-tRNA synthetase family. IleS type 1 subfamily. Monomer. The cofactor is Zn(2+).

Its subcellular location is the cytoplasm. The enzyme catalyses tRNA(Ile) + L-isoleucine + ATP = L-isoleucyl-tRNA(Ile) + AMP + diphosphate. Its function is as follows. Catalyzes the attachment of isoleucine to tRNA(Ile). As IleRS can inadvertently accommodate and process structurally similar amino acids such as valine, to avoid such errors it has two additional distinct tRNA(Ile)-dependent editing activities. One activity is designated as 'pretransfer' editing and involves the hydrolysis of activated Val-AMP. The other activity is designated 'posttransfer' editing and involves deacylation of mischarged Val-tRNA(Ile). This is Isoleucine--tRNA ligase from Lacticaseibacillus casei (strain BL23) (Lactobacillus casei).